We begin with the raw amino-acid sequence, 473 residues long: 3-oxoacyl-[acyl-carrier-protein] synthase I, chloroplastic (473 aa).

A compositionally biased stretch (polar residues) spans 1 to 10; the sequence is MQALQSSSLR. The segment at 1-26 is disordered; the sequence is MQALQSSSLRASPPNPLRLPSNRQSH. The N-terminal 46 residues, 1 to 46, are a transit peptide targeting the chloroplast; sequence MQALQSSSLRASPPNPLRLPSNRQSHQLITNARPLRRQQRSFISAS. Residues 60–470 enclose the Ketosynthase family 3 (KS3) domain; that stretch reads KKRVVITGMG…GHNSVVAFSA (411 aa). Catalysis depends on for beta-ketoacyl synthase activity residues Cys-224, His-364, and His-400.

Belongs to the thiolase-like superfamily. Beta-ketoacyl-ACP synthases family. As to quaternary structure, homodimer.

The protein resides in the plastid. The protein localises to the chloroplast stroma. It catalyses the reaction a fatty acyl-[ACP] + malonyl-[ACP] + H(+) = a 3-oxoacyl-[ACP] + holo-[ACP] + CO2. Catalyzes the condensation reaction of fatty acid synthesis by the addition to an acyl acceptor of two carbons from malonyl-ACP. Specific for elongation from C-10 to unsaturated C-16 and C-18 fatty acids. The polypeptide is 3-oxoacyl-[acyl-carrier-protein] synthase I, chloroplastic (KAS1) (Arabidopsis thaliana (Mouse-ear cress)).